The chain runs to 291 residues: Polyamine aminopropyltransferase (291 aa).

The PABS domain maps to 5–245; it reads PGPVSLIEPL…YAVNYIIGSL (241 aa). Gln-36 serves as a coordination point for S-methyl-5'-thioadenosine. Residues His-67 and Glu-91 each coordinate spermidine. Residues Asp-111 and 143 to 144 contribute to the S-methyl-5'-thioadenosine site; that span reads DG. Asp-164 (proton acceptor) is an active-site residue.

The protein belongs to the spermidine/spermine synthase family. As to quaternary structure, homodimer or homotetramer.

The protein localises to the cytoplasm. It carries out the reaction S-adenosyl 3-(methylsulfanyl)propylamine + putrescine = S-methyl-5'-thioadenosine + spermidine + H(+). It participates in amine and polyamine biosynthesis; spermidine biosynthesis; spermidine from putrescine: step 1/1. Catalyzes the irreversible transfer of a propylamine group from the amino donor S-adenosylmethioninamine (decarboxy-AdoMet) to putrescine (1,4-diaminobutane) to yield spermidine. The protein is Polyamine aminopropyltransferase of Pyrobaculum islandicum (strain DSM 4184 / JCM 9189 / GEO3).